The primary structure comprises 521 residues: Cytochrome P450 1A1 (521 aa).

Phenylalanine 229 serves as a coordination point for substrate. Residue cysteine 463 coordinates heme.

The protein belongs to the cytochrome P450 family. The cofactor is heme.

The protein resides in the endoplasmic reticulum membrane. It localises to the microsome membrane. The catalysed reaction is an organic molecule + reduced [NADPH--hemoprotein reductase] + O2 = an alcohol + oxidized [NADPH--hemoprotein reductase] + H2O + H(+). Its function is as follows. Cytochromes P450 are a group of heme-thiolate monooxygenases. They oxidize a variety of structurally unrelated compounds, including steroids, fatty acids, and xenobiotics. The polypeptide is Cytochrome P450 1A1 (cyp1a1) (Pleuronectes platessa (European plaice)).